Consider the following 507-residue polypeptide: ATP synthase subunit alpha, chloroplastic (507 aa).

G170–T177 contacts ATP.

The protein belongs to the ATPase alpha/beta chains family. In terms of assembly, F-type ATPases have 2 components, CF(1) - the catalytic core - and CF(0) - the membrane proton channel. CF(1) has five subunits: alpha(3), beta(3), gamma(1), delta(1), epsilon(1). CF(0) has four main subunits: a, b, b' and c.

It localises to the plastid. Its subcellular location is the chloroplast thylakoid membrane. The catalysed reaction is ATP + H2O + 4 H(+)(in) = ADP + phosphate + 5 H(+)(out). Its function is as follows. Produces ATP from ADP in the presence of a proton gradient across the membrane. The alpha chain is a regulatory subunit. The polypeptide is ATP synthase subunit alpha, chloroplastic (Oryza nivara (Indian wild rice)).